Here is a 239-residue protein sequence, read N- to C-terminus: Small ribosomal subunit protein uS3 (239 aa).

The 71-residue stretch at 39–109 (IRAMIQEIPE…KVQIKIKEVK (71 aa)) folds into the KH type-2 domain. The segment at 219 to 239 (GALLKKQRRPRTEKPAQAGRQ) is disordered.

The protein belongs to the universal ribosomal protein uS3 family. Part of the 30S ribosomal subunit. Forms a tight complex with proteins S10 and S14.

Functionally, binds the lower part of the 30S subunit head. Binds mRNA in the 70S ribosome, positioning it for translation. In Treponema denticola (strain ATCC 35405 / DSM 14222 / CIP 103919 / JCM 8153 / KCTC 15104), this protein is Small ribosomal subunit protein uS3.